Consider the following 467-residue polypeptide: Argininosuccinate lyase (467 aa).

This sequence belongs to the lyase 1 family. Argininosuccinate lyase subfamily.

Its subcellular location is the cytoplasm. The catalysed reaction is 2-(N(omega)-L-arginino)succinate = fumarate + L-arginine. It participates in amino-acid biosynthesis; L-arginine biosynthesis; L-arginine from L-ornithine and carbamoyl phosphate: step 3/3. In Rhizobium johnstonii (strain DSM 114642 / LMG 32736 / 3841) (Rhizobium leguminosarum bv. viciae), this protein is Argininosuccinate lyase.